We begin with the raw amino-acid sequence, 305 residues long: MSNLPFTVAALYCFAPLPQYESLREPLAQLCCANGIKGTLLLAAEGINGTVAGSAGAIEKLIAHITAIPGLGEPELKYSHASEMPFHRMKVRLKREIVTMGVEGIDPLKSVGTYIVPKDWNALIADENTVVVDTRNDYEYAIGTFEGAIDPQTRTFRAFPEWVKQNRDRLEGKKIAMFCTGGIRCEKATAFVKGLGFDDVYHLKGGILKYLEEVPREQSMWNGECFVFDERVAVGHGLAESDVELCRACRRPLTPQDKLSQFFEEGVSCAGCYAERTPEDRARYAERQKQVKLAEKRGANKHIGS.

The 95-residue stretch at 125-219 (ADENTVVVDT…YLEEVPREQS (95 aa)) folds into the Rhodanese domain. Catalysis depends on Cys179, which acts as the Cysteine persulfide intermediate.

It belongs to the TrhO family.

It carries out the reaction uridine(34) in tRNA + AH2 + O2 = 5-hydroxyuridine(34) in tRNA + A + H2O. Its function is as follows. Catalyzes oxygen-dependent 5-hydroxyuridine (ho5U) modification at position 34 in tRNAs. The polypeptide is tRNA uridine(34) hydroxylase (Brucella suis (strain ATCC 23445 / NCTC 10510)).